The sequence spans 37 residues: Large ribosomal subunit protein bL36 (37 aa).

It belongs to the bacterial ribosomal protein bL36 family.

This Cutibacterium acnes (strain DSM 16379 / KPA171202) (Propionibacterium acnes) protein is Large ribosomal subunit protein bL36.